The sequence spans 431 residues: 5-methylthioadenosine/S-adenosylhomocysteine deaminase (431 aa).

Residues H61 and H63 each coordinate Zn(2+). Positions 90 and 183 each coordinate substrate. A Zn(2+)-binding site is contributed by H210. E213 and D298 together coordinate substrate. D298 provides a ligand contact to Zn(2+).

Belongs to the metallo-dependent hydrolases superfamily. MTA/SAH deaminase family. Zn(2+) serves as cofactor.

It carries out the reaction S-adenosyl-L-homocysteine + H2O + H(+) = S-inosyl-L-homocysteine + NH4(+). The enzyme catalyses S-methyl-5'-thioadenosine + H2O + H(+) = S-methyl-5'-thioinosine + NH4(+). In terms of biological role, catalyzes the deamination of 5-methylthioadenosine and S-adenosyl-L-homocysteine into 5-methylthioinosine and S-inosyl-L-homocysteine, respectively. Is also able to deaminate adenosine. The protein is 5-methylthioadenosine/S-adenosylhomocysteine deaminase of Halobacterium salinarum (strain ATCC 700922 / JCM 11081 / NRC-1) (Halobacterium halobium).